The following is a 788-amino-acid chain: Probable phosphoketolase 1 (788 aa).

It belongs to the XFP family. Thiamine diphosphate serves as cofactor.

This Lactiplantibacillus plantarum (strain ATCC BAA-793 / NCIMB 8826 / WCFS1) (Lactobacillus plantarum) protein is Probable phosphoketolase 1.